The sequence spans 253 residues: Phosphate import ATP-binding protein PstB (253 aa).

Positions 7–249 (ASAKNLNLWY…PQSSKTKRYI (243 aa)) constitute an ABC transporter domain. 39 to 46 (GPSGCGKS) provides a ligand contact to ATP.

This sequence belongs to the ABC transporter superfamily. Phosphate importer (TC 3.A.1.7) family. In terms of assembly, the complex is composed of two ATP-binding proteins (PstB), two transmembrane proteins (PstC and PstA) and a solute-binding protein (PstS).

Its subcellular location is the cell inner membrane. It carries out the reaction phosphate(out) + ATP + H2O = ADP + 2 phosphate(in) + H(+). Functionally, part of the ABC transporter complex PstSACB involved in phosphate import. Responsible for energy coupling to the transport system. The chain is Phosphate import ATP-binding protein PstB from Ehrlichia ruminantium (strain Gardel).